Here is a 192-residue protein sequence, read N- to C-terminus: Glycerol-3-phosphate acyltransferase (192 aa).

Transmembrane regions (helical) follow at residues 4 to 24, 54 to 74, 80 to 100, 112 to 132, and 154 to 174; these read MFWL…AILL, LAIL…LIAS, IAQQ…PVYF, AGVL…AWLL, and LLAW…LLIV.

The protein belongs to the PlsY family. Probably interacts with PlsX.

Its subcellular location is the cell inner membrane. The catalysed reaction is an acyl phosphate + sn-glycerol 3-phosphate = a 1-acyl-sn-glycero-3-phosphate + phosphate. It participates in lipid metabolism; phospholipid metabolism. In terms of biological role, catalyzes the transfer of an acyl group from acyl-phosphate (acyl-PO(4)) to glycerol-3-phosphate (G3P) to form lysophosphatidic acid (LPA). This enzyme utilizes acyl-phosphate as fatty acyl donor, but not acyl-CoA or acyl-ACP. The polypeptide is Glycerol-3-phosphate acyltransferase (Pseudomonas savastanoi pv. phaseolicola (strain 1448A / Race 6) (Pseudomonas syringae pv. phaseolicola (strain 1448A / Race 6))).